A 145-amino-acid polypeptide reads, in one-letter code: Brain and acute leukemia cytoplasmic protein (145 aa).

The N-myristoyl glycine moiety is linked to residue G2. A lipid anchor (S-palmitoyl cysteine) is attached at C3. The tract at residues 3–35 is interaction with CAMK2A; that stretch reads CGGSRADAIEPRYYESWTRETESTWLTYTDSDA. Residues 27–119 form a disordered region; that stretch reads WLTYTDSDAP…AKRDAKRMPA (93 aa). Over residues 32–46 the composition is skewed to low complexity; it reads DSDAPPSAAAPDSGP. Residues 83–108 are compositionally biased toward polar residues; that stretch reads CETQCPNPQSLSSGPLTQKQNGLQTT. Positions 109 to 119 are enriched in basic and acidic residues; the sequence is EAKRDAKRMPA.

Interacts with CAMK2A. Post-translationally, palmitoylation and myristoylation target the protein to the lipid rafts. In terms of tissue distribution, predominantly expressed in neuroectoderm-derived tissues. Expressed in the brain and spinal cord, and at low levels, in the adrenal gland. In the bone marrow, confined to the CD34+ progenitor cells. Not found in peripheral blood mononuclear cells, nor lymph nodes. Tends to be expressed at high levels in acute myeloid leukemia and glioblastoma cells.

It localises to the cytoplasm. The protein localises to the synapse. It is found in the synaptosome. Its subcellular location is the membrane raft. The protein resides in the postsynaptic density. In terms of biological role, may play a synaptic role at the postsynaptic lipid rafts possibly through interaction with CAMK2A. In Homo sapiens (Human), this protein is Brain and acute leukemia cytoplasmic protein.